A 904-amino-acid chain; its full sequence is Toll-like receptor 3 (904 aa).

Residues methionine 1–alanine 26 form the signal peptide. The LRRNT domain maps to histidine 27–threonine 52. At histidine 27–leucine 705 the chain is on the lumenal side. Cysteine 29 and cysteine 38 are oxidised to a cystine. Asparagine 53, asparagine 58, and asparagine 71 each carry an N-linked (GlcNAc...) asparagine glycan. LRR repeat units lie at residues asparagine 53–arginine 74, glutamine 77–serine 98, tryptophan 101–phenylalanine 122, asparagine 125–asparagine 146, asparagine 149–glutamine 170, and asparagine 173–phenylalanine 194. Cysteine 96 and cysteine 123 are oxidised to a cystine. N-linked (GlcNAc...) asparagine glycosylation is present at asparagine 125. Asparagine 197 carries N-linked (GlcNAc...) asparagine glycosylation. LRR repeat units lie at residues serine 199–threonine 220 and glutamate 223–glutamate 245. N-linked (GlcNAc...) asparagine glycans are attached at residues asparagine 248, asparagine 253, asparagine 276, and asparagine 292. LRR repeat units lie at residues serine 250–glycine 271, asparagine 276–tryptophan 297, histidine 300–glycine 321, asparagine 324–proline 345, cysteine 357–glycine 378, arginine 381–threonine 401, proline 409–tryptophan 430, histidine 433–glycine 455, tyrosine 466–methionine 487, asparagine 508–glycine 529, lysine 532–glycine 553, histidine 564–aspartate 585, glutamate 588–asparagine 609, and serine 612–proline 633. Asparagine 399 carries N-linked (GlcNAc...) asparagine glycosylation. N-linked (GlcNAc...) asparagine glycans are attached at residues asparagine 637, asparagine 663, and asparagine 668. In terms of domain architecture, LRRCT spans asparagine 646–aspartate 699. 2 cysteine pairs are disulfide-bonded: cysteine 650-cysteine 678 and cysteine 652-cysteine 697. Residues leucine 706–phenylalanine 726 form a helical membrane-spanning segment. Residues glutamate 727–histidine 904 are Cytoplasmic-facing. A TIR domain is found at phenylalanine 754–leucine 897. Residue tyrosine 759 is modified to Phosphotyrosine. Glycyl lysine isopeptide (Lys-Gly) (interchain with G-Cter in ubiquitin) cross-links involve residues lysine 765, lysine 812, and lysine 831. Residue tyrosine 858 is modified to Phosphotyrosine.

The protein belongs to the Toll-like receptor family. As to quaternary structure, monomer and homodimer; dimerization is triggered by ligand-binding, the signaling unit is composed of one ds-RNA of around 40 bp and two TLR3 molecules, and lateral clustering of signaling units along the length of the ds-RNA ligand is required for TLR3 signal transduction. Interacts (via transmembrane domain) with UNC93B1; the interaction is required for transport from the ER to the endosomes. Interacts with TICAM1 (via the TIR domain) in response to poly(I:C) and this interaction is enhanced in the presence of WDFY1. Interacts with SRC; upon binding of double-stranded RNA. The tyrosine-phosphorylated form (via TIR domain) interacts with WDFY1 (via WD repeat 2) in response to poly(I:C). Post-translationally, TLR3 signaling requires a proteolytic cleavage mediated by cathepsins CTSB and CTSH, the cleavage occurs between amino acids 252 and 346. The cleaved form of TLR3 is the predominant form found in endosomes. In terms of processing, ubiquitinated by TRIM3; leading to recognition and sorting of polyubiquitinated TLR3 by the ESCRT complexes. Ubiquitinated by ZNRF1 via 'Lys-63'-linked ubiquitin chains; leading to TLR3 lysosomal trafficking and degradation. Ubiquitinated by RNF170 at Lys-765 via 'Lys-48'-linked ubiquitin chains; leading to TLR3 proteasomal degradation.

Its subcellular location is the endoplasmic reticulum membrane. The protein resides in the endosome membrane. The protein localises to the early endosome. Its function is as follows. Key component of innate and adaptive immunity. TLRs (Toll-like receptors) control host immune response against pathogens through recognition of molecular patterns specific to microorganisms. TLR3 is a nucleotide-sensing TLR which is activated by double-stranded RNA, a sign of viral infection. Acts via the adapter TRIF/TICAM1, leading to NF-kappa-B activation, IRF3 nuclear translocation, cytokine secretion and the inflammatory response. The polypeptide is Toll-like receptor 3 (TLR3) (Bos taurus (Bovine)).